A 184-amino-acid polypeptide reads, in one-letter code: ATP synthase subunit b, chloroplastic (184 aa).

The chain crosses the membrane as a helical span at residues 27-49 (LATNPINLSVVLGVLVFFGKGVL).

It belongs to the ATPase B chain family. In terms of assembly, F-type ATPases have 2 components, F(1) - the catalytic core - and F(0) - the membrane proton channel. F(1) has five subunits: alpha(3), beta(3), gamma(1), delta(1), epsilon(1). F(0) has four main subunits: a(1), b(1), b'(1) and c(10-14). The alpha and beta chains form an alternating ring which encloses part of the gamma chain. F(1) is attached to F(0) by a central stalk formed by the gamma and epsilon chains, while a peripheral stalk is formed by the delta, b and b' chains.

The protein resides in the plastid. Its subcellular location is the chloroplast thylakoid membrane. Functionally, f(1)F(0) ATP synthase produces ATP from ADP in the presence of a proton or sodium gradient. F-type ATPases consist of two structural domains, F(1) containing the extramembraneous catalytic core and F(0) containing the membrane proton channel, linked together by a central stalk and a peripheral stalk. During catalysis, ATP synthesis in the catalytic domain of F(1) is coupled via a rotary mechanism of the central stalk subunits to proton translocation. Its function is as follows. Component of the F(0) channel, it forms part of the peripheral stalk, linking F(1) to F(0). The protein is ATP synthase subunit b, chloroplastic of Phaseolus vulgaris (Kidney bean).